We begin with the raw amino-acid sequence, 27 residues long: Cupiennin-3d (27 aa).

Glutamate 27 carries the post-translational modification Glutamic acid 1-amide.

Expressed by the venom gland.

It localises to the secreted. This chain is Cupiennin-3d, found in Cupiennius salei (American wandering spider).